Here is a 301-residue protein sequence, read N- to C-terminus: Probable alpha-L-glutamate ligase (301 aa).

The region spanning 104–287 (LQLLSRKGIG…VAGLIYEFIE (184 aa)) is the ATP-grasp domain. Residues Lys-141, 178–179 (EF), Asp-187, and 211–213 (RSN) each bind ATP. Residues Asp-248, Glu-260, and Asn-262 each coordinate Mg(2+). 3 residues coordinate Mn(2+): Asp-248, Glu-260, and Asn-262.

This sequence belongs to the RimK family. Mg(2+) serves as cofactor. The cofactor is Mn(2+).

The sequence is that of Probable alpha-L-glutamate ligase from Shewanella loihica (strain ATCC BAA-1088 / PV-4).